Consider the following 197-residue polypeptide: Large ribosomal subunit protein eL15 (197 aa).

Residues 163-172 show a composition bias toward basic residues; sequence GKTSAGRKGR. Residues 163 to 197 form a disordered region; the sequence is GKTSAGRKGRGMQTRGTGTEKTRPSVRSNLNRSKK. Residues 186–197 show a composition bias toward polar residues; the sequence is PSVRSNLNRSKK.

It belongs to the eukaryotic ribosomal protein eL15 family.

This chain is Large ribosomal subunit protein eL15, found in Methanococcoides burtonii (strain DSM 6242 / NBRC 107633 / OCM 468 / ACE-M).